We begin with the raw amino-acid sequence, 470 residues long: MLTIYNTLTRKKEEFKPLHPGVVNMYVCGPTVYNYIHIGNARSAIAFDTVRRYLEFKGYKVNYVSNFTDVDDKMIKAAAEQGITVPQLAEKYINAFMEDTAAINIEPATLHPRATENITEIIKFVQGLIEKGYAYPKDGDVYYRARKFNHYGQLSGQSLDDLEVGASEHVSADEVNKKEDPLDFALWKAAKPGEISWDSPWGKGRPGWHIECSVMSTKYLGKTIDIHAGGQDLEFPHHENEIAQSEAETGQKFVRYWMHNGFVTIGKDNEKMSKSLHNFITVHEIIKEVDPQVLRFFMATTQYRRPIQYSQANLTDAQNNLNHIQTAFDNLTYREQDADEGDVQEVTDRLEQFHHQFITAMDDDINVQNGIATVYELVKYANVYAQQDNVSLGAIQAIKKELVELMSIFGVKLEASDNQINDEKIKQLIEERNIARKNKDFARSDEIRDNLKKQGIILEDTPQGTRYKKE.

C28 contributes to the Zn(2+) binding site. A 'HIGH' region motif is present at residues 30 to 40; the sequence is PTVYNYIHIGN. Positions 212, 237, and 241 each coordinate Zn(2+). Positions 271–275 match the 'KMSKS' region motif; sequence KMSKS. K274 serves as a coordination point for ATP.

It belongs to the class-I aminoacyl-tRNA synthetase family. In terms of assembly, monomer. Zn(2+) serves as cofactor.

The protein localises to the cytoplasm. The catalysed reaction is tRNA(Cys) + L-cysteine + ATP = L-cysteinyl-tRNA(Cys) + AMP + diphosphate. The sequence is that of Cysteine--tRNA ligase from Limosilactobacillus reuteri (strain DSM 20016) (Lactobacillus reuteri).